The chain runs to 445 residues: Phosphoglucosamine mutase (445 aa).

Ser102 acts as the Phosphoserine intermediate in catalysis. Ser102, Asp241, Asp243, and Asp245 together coordinate Mg(2+). Ser102 is modified (phosphoserine).

This sequence belongs to the phosphohexose mutase family. The cofactor is Mg(2+). Post-translationally, activated by phosphorylation.

The enzyme catalyses alpha-D-glucosamine 1-phosphate = D-glucosamine 6-phosphate. Its function is as follows. Catalyzes the conversion of glucosamine-6-phosphate to glucosamine-1-phosphate. The protein is Phosphoglucosamine mutase of Shewanella baltica (strain OS155 / ATCC BAA-1091).